Here is a 294-residue protein sequence, read N- to C-terminus: ATP synthase gamma chain (294 aa).

It belongs to the ATPase gamma chain family. As to quaternary structure, F-type ATPases have 2 components, CF(1) - the catalytic core - and CF(0) - the membrane proton channel. CF(1) has five subunits: alpha(3), beta(3), gamma(1), delta(1), epsilon(1). CF(0) has three main subunits: a, b and c.

It localises to the cell inner membrane. Produces ATP from ADP in the presence of a proton gradient across the membrane. The gamma chain is believed to be important in regulating ATPase activity and the flow of protons through the CF(0) complex. In Campylobacter lari (strain RM2100 / D67 / ATCC BAA-1060), this protein is ATP synthase gamma chain.